Reading from the N-terminus, the 342-residue chain is tRNA dimethylallyltransferase (342 aa).

Gly-39–Thr-46 lines the ATP pocket. Position 41 to 46 (Thr-41 to Thr-46) interacts with substrate. The segment at Asp-64 to Gln-67 is interaction with substrate tRNA.

It belongs to the IPP transferase family. In terms of assembly, monomer. It depends on Mg(2+) as a cofactor.

The catalysed reaction is adenosine(37) in tRNA + dimethylallyl diphosphate = N(6)-dimethylallyladenosine(37) in tRNA + diphosphate. Functionally, catalyzes the transfer of a dimethylallyl group onto the adenine at position 37 in tRNAs that read codons beginning with uridine, leading to the formation of N6-(dimethylallyl)adenosine (i(6)A). This is tRNA dimethylallyltransferase from Chlamydia pneumoniae (Chlamydophila pneumoniae).